The chain runs to 570 residues: Carotenoid cleavage dioxygenase 8, chloroplastic (570 aa).

The transit peptide at 1–56 directs the protein to the chloroplast; it reads MASLITTKAMMSHHHVLSSTRITTLYSDNSIGDQQIKTKPQVPHRLFARRIFGVTR. Fe cation-binding residues include H254, H305, H372, and H563.

It belongs to the carotenoid oxygenase family. Fe(2+) serves as cofactor. As to expression, expressed in flowers, siliques, inflorescence stems, petiole and leaves, and at a much higher level in roots.

Its subcellular location is the plastid. The protein localises to the chloroplast. The catalysed reaction is 9-cis-10'-apo-beta-carotenal + 2 O2 = (2E,4E,6E)-7-hydroxy-4-methylhepta-2,4,6-trienal + (11R)-carlactone. It carries out the reaction all-trans-10'-apo-beta-carotenal + O2 = (2E,4E,6E)-4-methylocta-2,4,6-trienedial + 13-apo-beta-carotenone. Functionally, involved in strigolactones biosynthesis by cleaving the C(27) 9-cis-10'-apo-beta-carotenal produced by CCD7. Produces the C(19) carlactone and a C(8) hydroxyaldehyde. Also shows lower activity with all-trans-10'-apo-beta-carotenal producing a C(9) dialdehyde and the C(18) 13-apo-beta-carotenone. Strigolactones are hormones that inhibit tillering and shoot branching through the MAX-dependent pathway, contribute to the regulation of shoot architectural response to phosphate-limiting conditions and function as rhizosphere signal that stimulates hyphal branching of arbuscular mycorrhizal fungi and trigger seed germination of root parasitic weeds. Also active on other carotenoid substrates like licopene or zeaxanthin. In Arabidopsis thaliana (Mouse-ear cress), this protein is Carotenoid cleavage dioxygenase 8, chloroplastic.